The chain runs to 54 residues: Ovomucoid (54 aa).

The Kazal-like domain occupies 4–54; sequence VDCSEHPKPACTLEDRPLCGSDNKIYSNKCDFCNAVLESNGTLTLSHFGKC. 3 disulfides stabilise this stretch: Cys6-Cys36, Cys14-Cys33, and Cys22-Cys54. Residue Asn43 is glycosylated (N-linked (GlcNAc...) asparagine).

The protein localises to the secreted. The chain is Ovomucoid from Argusianus argus (Great argus).